We begin with the raw amino-acid sequence, 349 residues long: Cobalt-precorrin-5B C(1)-methyltransferase (349 aa).

Belongs to the CbiD family.

The catalysed reaction is Co-precorrin-5B + S-adenosyl-L-methionine = Co-precorrin-6A + S-adenosyl-L-homocysteine. It functions in the pathway cofactor biosynthesis; adenosylcobalamin biosynthesis; cob(II)yrinate a,c-diamide from sirohydrochlorin (anaerobic route): step 6/10. Functionally, catalyzes the methylation of C-1 in cobalt-precorrin-5B to form cobalt-precorrin-6A. This chain is Cobalt-precorrin-5B C(1)-methyltransferase, found in Saccharolobus islandicus (strain L.S.2.15 / Lassen #1) (Sulfolobus islandicus).